The following is a 499-amino-acid chain: Guanosine-5'-triphosphate,3'-diphosphate pyrophosphatase (499 aa).

The protein belongs to the GppA/Ppx family. GppA subfamily.

It catalyses the reaction guanosine 3'-diphosphate 5'-triphosphate + H2O = guanosine 3',5'-bis(diphosphate) + phosphate + H(+). The protein operates within purine metabolism; ppGpp biosynthesis; ppGpp from GTP: step 2/2. Catalyzes the conversion of pppGpp to ppGpp. Guanosine pentaphosphate (pppGpp) is a cytoplasmic signaling molecule which together with ppGpp controls the 'stringent response', an adaptive process that allows bacteria to respond to amino acid starvation, resulting in the coordinated regulation of numerous cellular activities. The protein is Guanosine-5'-triphosphate,3'-diphosphate pyrophosphatase of Klebsiella pneumoniae (strain 342).